The following is a 294-amino-acid chain: uncharacterized protein (294 aa).

The signal sequence occupies residues 1–18 (MKKLLLIITVFFTCSAVA).

This is an uncharacterized protein from Rickettsia bellii (strain RML369-C).